The chain runs to 938 residues: Isoleucine--tRNA ligase (938 aa).

The 'HIGH' region signature appears at 58 to 68 (PYANGSIHIGH). Lys-183 is modified (N6-acetyllysine). Glu-561 provides a ligand contact to L-isoleucyl-5'-AMP. The 'KMSKS' region motif lies at 602 to 606 (KMSKS). Lys-605 contributes to the ATP binding site. The Zn(2+) site is built by Cys-901, Cys-904, Cys-921, and Cys-924.

Belongs to the class-I aminoacyl-tRNA synthetase family. IleS type 1 subfamily. In terms of assembly, monomer. Requires Zn(2+) as cofactor.

It is found in the cytoplasm. The catalysed reaction is tRNA(Ile) + L-isoleucine + ATP = L-isoleucyl-tRNA(Ile) + AMP + diphosphate. Catalyzes the attachment of isoleucine to tRNA(Ile). As IleRS can inadvertently accommodate and process structurally similar amino acids such as valine, to avoid such errors it has two additional distinct tRNA(Ile)-dependent editing activities. One activity is designated as 'pretransfer' editing and involves the hydrolysis of activated Val-AMP. The other activity is designated 'posttransfer' editing and involves deacylation of mischarged Val-tRNA(Ile). The protein is Isoleucine--tRNA ligase of Shigella flexneri.